A 395-amino-acid chain; its full sequence is E3 ubiquitin-protein ligase RNFT1 (395 aa).

2 disordered regions span residues 1 to 58 (MQAS…SSRN) and 78 to 97 (YSHS…GEHG). Helical transmembrane passes span 118–138 (ILIL…LGIG), 165–185 (CAWL…TFHS), 193–213 (IFLN…IVGI), 216–236 (FILK…PSFI), 258–278 (IFVP…FGNV), and 283–303 (LGIL…FGHL). The required for ubiquitin ligase activity and for protection against ER stress-induced cell death stretch occupies residues 328 to 379 (CSDMDGICTICQAEFQKPVLLFCQHIFCEECITLWFNREKTCPLCRTVISEC). An RING-type zinc finger spans residues 335–373 (CTICQAEFQKPVLLFCQHIFCEECITLWFNREKTCPLCR).

In terms of tissue distribution, predominantly expressed in testis.

The protein localises to the early endosome membrane. The catalysed reaction is S-ubiquitinyl-[E2 ubiquitin-conjugating enzyme]-L-cysteine + [acceptor protein]-L-lysine = [E2 ubiquitin-conjugating enzyme]-L-cysteine + N(6)-ubiquitinyl-[acceptor protein]-L-lysine.. It participates in protein modification; protein ubiquitination. Functionally, E3 ubiquitin-protein ligase that acts in the endoplasmic reticulum (ER)-associated degradation (ERAD) pathway, which targets misfolded proteins that accumulate in the endoplasmic reticulum (ER) for ubiquitination and subsequent proteasome-mediated degradation. Protects cells from ER stress-induced apoptosis. The polypeptide is E3 ubiquitin-protein ligase RNFT1 (Rnft1) (Mus musculus (Mouse)).